The chain runs to 228 residues: Putative adhesin A1I_01215 (228 aa).

The N-terminal stretch at 1-22 (MKKLLLIAATSATVLSSALSFA) is a signal peptide.

This chain is Putative adhesin A1I_01215, found in Rickettsia bellii (strain OSU 85-389).